Here is a 473-residue protein sequence, read N- to C-terminus: Pre-mRNA-splicing factor PRP46 (473 aa).

Positions 1–14 (MSTSLETPSGTSAG) are enriched in polar residues. 2 disordered regions span residues 1–21 (MSTS…VASG) and 103–126 (GPNV…QAVA). 7 WD repeats span residues 180 to 219 (GHMG…LKLS), 222 to 261 (GHIS…VIRH), 264 to 303 (GHFS…NIFT), 306 to 347 (GHTS…NTLT), 349 to 388 (HKKS…FVNN), 391 to 429 (GHEA…PFQH), and 440 to 473 (DAEA…SEQA).

It belongs to the WD repeat PRL1/PRL2 family. In terms of assembly, associated with the spliceosome.

The protein resides in the cytoplasm. The protein localises to the nucleus. In terms of biological role, involved in pre-mRNA splicing and required for cell cycle progression at G2/M. This is Pre-mRNA-splicing factor PRP46 (PRP46) from Cryptococcus neoformans var. neoformans serotype D (strain B-3501A) (Filobasidiella neoformans).